A 1157-amino-acid polypeptide reads, in one-letter code: uncharacterized protein (1157 aa).

The segment covering 1 to 10 (MDPHWKRHDS) has biased composition (basic and acidic residues). Disordered regions lie at residues 1 to 35 (MDPHWKRHDSSNIPTQPSPSASPKSNKPSSAQRFG), 159 to 233 (QTTP…SVEP), and 478 to 498 (KNQSSHRRNSSTSSGETGKGP). Composition is skewed to low complexity over residues 18-31 (SPSASPKSNKPSSA) and 181-197 (SAGTDPFSPVSPSNPNF). The segment covering 208–228 (QEWQQSPLESPLSMHSLQESL) has biased composition (polar residues). Residues 501–574 (VWFKPSDKRI…KVEYKAILHD (74 aa)) enclose the CSD2 domain. Positions 608–921 (LRDKLTFMIG…ICVQRQLREA (314 aa)) constitute an RNB domain. A DIS3L2 C-terminal domain is found at 973 to 1030 (GLVKHKAFVLAVDQEYIDIVIYEFGLERRISLDLLPLSNCDFNEQKHELYLSWRTNAS). The disordered stretch occupies residues 1084–1113 (YSKARGNDSTSKTAKSSSGNQDISGDGKLH). Residues 1090–1106 (NDSTSKTAKSSSGNQDI) show a composition bias toward polar residues.

It belongs to the RNR ribonuclease family.

Its subcellular location is the cytoplasm. This is an uncharacterized protein from Schizosaccharomyces pombe (strain 972 / ATCC 24843) (Fission yeast).